The sequence spans 201 residues: Recombination protein RecR (201 aa).

Residues Cys-60–Cys-75 form a C4-type zinc finger. Residues Ala-83 to Pro-178 form the Toprim domain.

It belongs to the RecR family.

Functionally, may play a role in DNA repair. It seems to be involved in an RecBC-independent recombinational process of DNA repair. It may act with RecF and RecO. This is Recombination protein RecR from Maricaulis maris (strain MCS10) (Caulobacter maris).